The sequence spans 397 residues: Ribosomal RNA large subunit methyltransferase I (397 aa).

The PUA domain occupies 2–79; that stretch reads SASIYLVKGR…KEETVDLDFF (78 aa).

This sequence belongs to the methyltransferase superfamily. RlmI family.

It is found in the cytoplasm. It catalyses the reaction cytidine(1962) in 23S rRNA + S-adenosyl-L-methionine = 5-methylcytidine(1962) in 23S rRNA + S-adenosyl-L-homocysteine + H(+). In terms of biological role, specifically methylates the cytosine at position 1962 (m5C1962) of 23S rRNA. This Aeromonas hydrophila subsp. hydrophila (strain ATCC 7966 / DSM 30187 / BCRC 13018 / CCUG 14551 / JCM 1027 / KCTC 2358 / NCIMB 9240 / NCTC 8049) protein is Ribosomal RNA large subunit methyltransferase I.